The primary structure comprises 960 residues: Glycine dehydrogenase (decarboxylating) (960 aa).

N6-(pyridoxal phosphate)lysine is present on lysine 709.

Belongs to the GcvP family. The glycine cleavage system is composed of four proteins: P, T, L and H. Pyridoxal 5'-phosphate serves as cofactor.

It catalyses the reaction N(6)-[(R)-lipoyl]-L-lysyl-[glycine-cleavage complex H protein] + glycine + H(+) = N(6)-[(R)-S(8)-aminomethyldihydrolipoyl]-L-lysyl-[glycine-cleavage complex H protein] + CO2. Functionally, the glycine cleavage system catalyzes the degradation of glycine. The P protein binds the alpha-amino group of glycine through its pyridoxal phosphate cofactor; CO(2) is released and the remaining methylamine moiety is then transferred to the lipoamide cofactor of the H protein. In Edwardsiella ictaluri (strain 93-146), this protein is Glycine dehydrogenase (decarboxylating).